Here is a 180-residue protein sequence, read N- to C-terminus: MVSFCCEVCQDIIKKPKLDQHRSRCHGAYFTCIDCNTTFERTDYRNHTSCMTEAQRYQKGLYRPTKKELKKAKMNGNAVNSKELSPNTDNQNTPAGPTKHSLDENEKDKENKKSKKETVSSPAEQLLALTQNQEISLYKLLKKYNKQASKEDSLDSKEVLKHLAITADAKGNYLVKPITK.

2 C2HC LYAR-type zinc fingers span residues 1–26 (MVSF…SRCH) and 27–51 (GAYF…TSCM). 8 residues coordinate Zn(2+): Cys6, Cys9, His21, Cys25, Cys32, Cys35, His47, and Cys50. The segment at 61–125 (LYRPTKKELK…KETVSSPAEQ (65 aa)) is disordered. Residues 77-95 (NAVNSKELSPNTDNQNTPA) are compositionally biased toward polar residues. At Ser85 the chain carries Phosphoserine. Over residues 100 to 111 (HSLDENEKDKEN) the composition is skewed to basic and acidic residues.

The protein belongs to the UPF0743 family.

The protein localises to the nucleus. This is UPF0743 protein C215.06c from Schizosaccharomyces pombe (strain 972 / ATCC 24843) (Fission yeast).